The following is a 1377-amino-acid chain: DNA-directed RNA polymerase subunit beta (1377 aa).

Belongs to the RNA polymerase beta chain family. In terms of assembly, the RNAP catalytic core consists of 2 alpha, 1 beta, 1 beta' and 1 omega subunit. When a sigma factor is associated with the core the holoenzyme is formed, which can initiate transcription.

It carries out the reaction RNA(n) + a ribonucleoside 5'-triphosphate = RNA(n+1) + diphosphate. Functionally, DNA-dependent RNA polymerase catalyzes the transcription of DNA into RNA using the four ribonucleoside triphosphates as substrates. This Aromatoleum aromaticum (strain DSM 19018 / LMG 30748 / EbN1) (Azoarcus sp. (strain EbN1)) protein is DNA-directed RNA polymerase subunit beta.